We begin with the raw amino-acid sequence, 177 residues long: Large ribosomal subunit protein uL6 (177 aa).

The span at 152 to 171 (RPPEPYKGKGVRYDDEEVRR) shows a compositional bias: basic and acidic residues. The tract at residues 152 to 177 (RPPEPYKGKGVRYDDEEVRRKEAKKK) is disordered.

This sequence belongs to the universal ribosomal protein uL6 family. Part of the 50S ribosomal subunit.

Its function is as follows. This protein binds to the 23S rRNA, and is important in its secondary structure. It is located near the subunit interface in the base of the L7/L12 stalk, and near the tRNA binding site of the peptidyltransferase center. This chain is Large ribosomal subunit protein uL6, found in Shewanella putrefaciens (strain CN-32 / ATCC BAA-453).